Here is a 397-residue protein sequence, read N- to C-terminus: Linalool dehydratase/isomerase (397 aa).

Positions M1–A26 are cleaved as a signal peptide. D64 functions as the Proton donor/acceptor in the catalytic mechanism. 2 disulfide bridges follow: C74/C127 and C196/C205. Residue C196 participates in (2E)-geraniol binding.

As to quaternary structure, homotetramer. Homopentamer.

Its subcellular location is the periplasm. It catalyses the reaction (S)-linalool = beta-myrcene + H2O. It carries out the reaction (2E)-geraniol = (S)-linalool. The protein operates within terpene metabolism; monoterpene degradation. Is inhibited by molecular oxygen, high salt concentrations (NaCl, KCl, or MgCl(2)), urea, and Ti(III)citrate. Activity is not affected by EDTA. Functionally, anaerobically catalyzes the stereospecific hydration of beta-myrcene to (3S)-linalool and the isomerization of (3S)-linalool to geraniol. Is thus involved in the initial steps of the anaerobic degradation of the monoterpene beta-myrcene. Also catalyzes the reverse reactions, i.e. the isomerization of geraniol to linalool and the dehydration of linalool to myrcene. In this direction, the formation of myrcene from geraniol may be seen as a detoxification process for the monoterpene alcohol. Shows a relatively broad substrate specificity and can use various geraniol and linalool derivatives. Substrates required a specific alpha-methylallyl alcohol signature motif. Neither the monoterpenes alpha- and beta-ocimene nor the monoterpenoids citronellol and nerol can be used as substrates. The sequence is that of Linalool dehydratase/isomerase from Castellaniella defragrans (strain DSM 12143 / CCUG 39792 / 65Phen) (Alcaligenes defragrans).